The sequence spans 415 residues: Serine--tRNA ligase (415 aa).

An L-serine-binding site is contributed by 231–233 (TAE). Residue 262–264 (RSE) coordinates ATP. Position 285 (E285) interacts with L-serine. 349–352 (EISS) is an ATP binding site. Residue S383 participates in L-serine binding.

It belongs to the class-II aminoacyl-tRNA synthetase family. Type-1 seryl-tRNA synthetase subfamily. Homodimer. The tRNA molecule binds across the dimer.

Its subcellular location is the cytoplasm. The enzyme catalyses tRNA(Ser) + L-serine + ATP = L-seryl-tRNA(Ser) + AMP + diphosphate + H(+). It catalyses the reaction tRNA(Sec) + L-serine + ATP = L-seryl-tRNA(Sec) + AMP + diphosphate + H(+). It functions in the pathway aminoacyl-tRNA biosynthesis; selenocysteinyl-tRNA(Sec) biosynthesis; L-seryl-tRNA(Sec) from L-serine and tRNA(Sec): step 1/1. Catalyzes the attachment of serine to tRNA(Ser). Is also able to aminoacylate tRNA(Sec) with serine, to form the misacylated tRNA L-seryl-tRNA(Sec), which will be further converted into selenocysteinyl-tRNA(Sec). In Helicobacter pylori (strain HPAG1), this protein is Serine--tRNA ligase.